The primary structure comprises 201 residues: Recombination protein RecR (201 aa).

Residues 57-72 (CADCRTFTEQEVCNIC) form a C4-type zinc finger. One can recognise a Toprim domain in the interval 81-176 (GQICVVESPA…EASRIAHGVP (96 aa)).

Belongs to the RecR family.

In terms of biological role, may play a role in DNA repair. It seems to be involved in an RecBC-independent recombinational process of DNA repair. It may act with RecF and RecO. The chain is Recombination protein RecR from Shigella boydii serotype 18 (strain CDC 3083-94 / BS512).